The sequence spans 115 residues: U3-lycotoxin-Ls1a (115 aa).

The signal sequence occupies residues 1-20 (MKFVLLFGVLLVTLFSYSSA). Positions 21–44 (EMLDDFDQADEEELLSLIEKEEAR) are excised as a propeptide. Disulfide bonds link C48–C63, C55–C72, C62–C87, and C74–C85.

Belongs to the neurotoxin 19 (CSTX) family. 01 subfamily. Expressed by the venom gland.

Its subcellular location is the secreted. This chain is U3-lycotoxin-Ls1a, found in Lycosa singoriensis (Wolf spider).